The sequence spans 317 residues: Aspartate carbamoyltransferase catalytic subunit (317 aa).

The carbamoyl phosphate site is built by arginine 66 and threonine 67. Lysine 94 lines the L-aspartate pocket. Residues arginine 116, histidine 144, and glutamine 147 each coordinate carbamoyl phosphate. Residues arginine 177 and arginine 231 each coordinate L-aspartate. Carbamoyl phosphate is bound by residues glycine 272 and proline 273.

Belongs to the aspartate/ornithine carbamoyltransferase superfamily. ATCase family. Heterododecamer (2C3:3R2) of six catalytic PyrB chains organized as two trimers (C3), and six regulatory PyrI chains organized as three dimers (R2).

It carries out the reaction carbamoyl phosphate + L-aspartate = N-carbamoyl-L-aspartate + phosphate + H(+). Its pathway is pyrimidine metabolism; UMP biosynthesis via de novo pathway; (S)-dihydroorotate from bicarbonate: step 2/3. In terms of biological role, catalyzes the condensation of carbamoyl phosphate and aspartate to form carbamoyl aspartate and inorganic phosphate, the committed step in the de novo pyrimidine nucleotide biosynthesis pathway. The polypeptide is Aspartate carbamoyltransferase catalytic subunit (Rhodopseudomonas palustris (strain HaA2)).